A 204-amino-acid chain; its full sequence is Recombination protein RecR (204 aa).

Residues 63–78 form a C4-type zinc finger; sequence CRRCFNITVGELCAIC. The Toprim domain occupies 86–181; it reads TKICVVEEPL…RVTRPARGLP (96 aa).

Belongs to the RecR family.

May play a role in DNA repair. It seems to be involved in an RecBC-independent recombinational process of DNA repair. It may act with RecF and RecO. The polypeptide is Recombination protein RecR (Chloroflexus aurantiacus (strain ATCC 29366 / DSM 635 / J-10-fl)).